Here is a 335-residue protein sequence, read N- to C-terminus: Dolichyl-diphosphooligosaccharide--protein glycosyltransferase subunit MAGT1 (335 aa).

Positions 1 to 29 (MAAGWWFWCVSVTVAVALLIVCDVPSVSA) are cleaved as a signal peptide. At 30–184 (QRKKEMVLSE…DVNIRVIRPP (155 aa)) the chain is on the extracellular side. The Thioredoxin domain maps to 47 to 175 (WTNKRPVIRM…IARWIADRTD (129 aa)). The N-linked (GlcNAc...) asparagine glycan is linked to asparagine 71. Cysteine 87 and cysteine 90 are disulfide-bonded. The helical transmembrane segment at 185 to 205 (NYAGPLMLGLLLAVIGGLVYL) threads the bilayer. Residues 206–209 (RRSN) lie on the Cytoplasmic side of the membrane. A helical membrane pass occupies residues 210 to 230 (MEFLFNKTGWAFAALCFVLAM). Topologically, residues 231–270 (TSGQMWNHIRGPPYAHKNPHTGHVNYIHGSSQAQFVAETH) are extracellular. The chain crosses the membrane as a helical span at residues 271–291 (IVLLFNGGVTLGMVLLCEAAT). The Cytoplasmic segment spans residues 292–300 (SDMDIGKRK). A helical transmembrane segment spans residues 301–321 (IMCVAGIGLVVLFFSWMLSIF). At 322–335 (RSKYHGYPYSFLMS) the chain is on the extracellular side.

It belongs to the OST3/OST6 family. Accessory component of the STT3B-containing form of the oligosaccharyltransferase (OST) complex. OST exists in two different complex forms which contain common core subunits RPN1, RPN2, OST48, OST4, DAD1 and TMEM258, either STT3A or STT3B as catalytic subunits, and form-specific accessory subunits. OST can form stable complexes with the Sec61 complex or with both the Sec61 and TRAP complexes. The association of TUSC3 or MAGT1 with the STT3B-containing complex seems to be mutually exclusvice.

The protein resides in the cell membrane. Its subcellular location is the endoplasmic reticulum. The protein localises to the endoplasmic reticulum membrane. It participates in protein modification; protein glycosylation. In terms of biological role, accessory component of the STT3B-containing form of the N-oligosaccharyl transferase (OST) complex which catalyzes the transfer of a high mannose oligosaccharide from a lipid-linked oligosaccharide donor to an asparagine residue within an Asn-X-Ser/Thr consensus motif in nascent polypeptide chains. Involved in N-glycosylation of STT3B-dependent substrates. Specifically required for the glycosylation of a subset of acceptor sites that are near cysteine residues; in this function seems to act redundantly with TUSC3. In its oxidized form proposed to form transient mixed disulfides with a glycoprotein substrate to facilitate access of STT3B to the unmodified acceptor site. Also has oxidoreductase-independent functions in the STT3B-containing OST complex possibly involving substrate recognition. Could indirectly play a role in Mg(2+) transport in epithelial cells. This chain is Dolichyl-diphosphooligosaccharide--protein glycosyltransferase subunit MAGT1, found in Pongo abelii (Sumatran orangutan).